The sequence spans 657 residues: Histidine ammonia-lyase (657 aa).

Residues 253-255 (ASG) constitute a cross-link (5-imidazolinone (Ala-Gly)). Ser-254 carries the 2,3-didehydroalanine (Ser) modification. Residue Thr-396 is modified to Phosphothreonine. Ser-635 carries the post-translational modification Phosphoserine. Thr-637 is modified (phosphothreonine). Phosphoserine is present on Ser-648.

It belongs to the PAL/histidase family. Contains an active site 4-methylidene-imidazol-5-one (MIO), which is formed autocatalytically by cyclization and dehydration of residues Ala-Ser-Gly.

The enzyme catalyses L-histidine = trans-urocanate + NH4(+). Its pathway is amino-acid degradation; L-histidine degradation into L-glutamate; N-formimidoyl-L-glutamate from L-histidine: step 1/3. The polypeptide is Histidine ammonia-lyase (Hal) (Mus musculus (Mouse)).